Here is a 206-residue protein sequence, read N- to C-terminus: Putative 3-methyladenine DNA glycosylase (206 aa).

It belongs to the DNA glycosylase MPG family.

This is Putative 3-methyladenine DNA glycosylase from Staphylococcus carnosus (strain TM300).